The following is a 65-amino-acid chain: Small ribosomal subunit protein bS21 (65 aa).

The interval 45–65 (GRLKRSRSRRRAQRANEERNS) is disordered. Positions 48–57 (KRSRSRRRAQ) are enriched in basic residues.

Belongs to the bacterial ribosomal protein bS21 family.

The sequence is that of Small ribosomal subunit protein bS21 from Pelodictyon phaeoclathratiforme (strain DSM 5477 / BU-1).